The sequence spans 138 residues: High mobility group B protein 4 (138 aa).

Disordered stretches follow at residues 1-41 and 105-138; these read MKGG…PPSA and LKLA…EDDD. The segment covering 18 to 29 has biased composition (basic residues); sequence KTRGRKAGKKTK. The segment at residues 35–104 is a DNA-binding region (HMG box); the sequence is PKRPPSAFFV…EYIKNVQQYN (70 aa). Phosphoserine occurs at positions 123 and 130. A compositionally biased stretch (acidic residues) spans 126–138; that stretch reads DEAVSEEEAEDDD.

Belongs to the HMGB family. In terms of tissue distribution, mostly expressed roots and flowers, and, to a lower extent, in stems and leaves.

It is found in the nucleus. The protein resides in the cytoplasm. It localises to the cytosol. Its function is as follows. Binds preferentially double-stranded DNA. This chain is High mobility group B protein 4 (HMGB4), found in Arabidopsis thaliana (Mouse-ear cress).